Here is a 669-residue protein sequence, read N- to C-terminus: Probable potassium transport system protein Kup (669 aa).

Transmembrane regions (helical) follow at residues 47–67 (VLML…TSPL), 86–106 (VIGI…IKYM), 144–164 (TIIG…TPAI), 172–192 (GLTL…IFVM), 206–226 (IGVI…LLGI), 252–272 (GMAG…GEAL), 288–308 (WFFV…ALLL), 326–346 (ALLP…QALI), 378–398 (IYIP…VLTF), 404–424 (LAAA…ILAF), 435–455 (LLKS…FFGA), and 460–480 (IPHG…LMTT).

It belongs to the HAK/KUP transporter (TC 2.A.72) family.

Its subcellular location is the cell inner membrane. The enzyme catalyses K(+)(in) + H(+)(in) = K(+)(out) + H(+)(out). In terms of biological role, transport of potassium into the cell. Likely operates as a K(+):H(+) symporter. In Bdellovibrio bacteriovorus (strain ATCC 15356 / DSM 50701 / NCIMB 9529 / HD100), this protein is Probable potassium transport system protein Kup.